The following is a 702-amino-acid chain: Ribosomal RNA large subunit methyltransferase K/L (702 aa).

Residues 43-154 (LVYQSLMWSR…KETASIALDL (112 aa)) form the THUMP domain.

Belongs to the methyltransferase superfamily. RlmKL family.

The protein localises to the cytoplasm. It catalyses the reaction guanosine(2445) in 23S rRNA + S-adenosyl-L-methionine = N(2)-methylguanosine(2445) in 23S rRNA + S-adenosyl-L-homocysteine + H(+). It carries out the reaction guanosine(2069) in 23S rRNA + S-adenosyl-L-methionine = N(2)-methylguanosine(2069) in 23S rRNA + S-adenosyl-L-homocysteine + H(+). Specifically methylates the guanine in position 2445 (m2G2445) and the guanine in position 2069 (m7G2069) of 23S rRNA. This Escherichia coli (strain K12 / DH10B) protein is Ribosomal RNA large subunit methyltransferase K/L.